Here is a 97-residue protein sequence, read N- to C-terminus: RxLR effector protein CRE10 (97 aa).

The N-terminal stretch at 1–21 is a signal peptide; it reads MRLSYILVVVIAVTLQACVCA. The RxLR-dEER signature appears at 48 to 66; the sequence is RLLRGVKKRTAEREVQEER.

Belongs to the RxLR effector family.

The protein resides in the secreted. It is found in the host cell. In terms of biological role, effector that is involved in host plant infection. Contributes to virulence during the early infection stage, by inhibiting plant defense responses induced by both PAMP-triggered immunity (PTI) and effector-triggered immunity (ETI). This is RxLR effector protein CRE10 from Phytophthora infestans (strain T30-4) (Potato late blight agent).